A 245-amino-acid chain; its full sequence is MTLTASSSSRAVTNSPVVVALDYHNRDDALAFVDKIDPRDCRLKVGKEMFTLFGPQFVRELQQRGFDIFLDLKFHDIPNTAAHAVAAAADLGVWMVNVHASGGARMMTAAREALVPFGKDAPLLIAVTVLTSMEASDLVDLGMTLSPADYAERLAALTQKCGLDGVVCSAQEAVRFKQVFGQEFKLVTPGIRPQGSEAGDQRRIMTPEQALSAGVDYMVIGRPVTQSVDPAQTLKAINASLQRSA.

Residues D22, K44, 71–80 (DLKFHDIPNT), T131, R192, Q201, G221, and R222 each bind substrate. K73 acts as the Proton donor in catalysis.

It belongs to the OMP decarboxylase family. Type 1 subfamily. Homodimer.

The enzyme catalyses orotidine 5'-phosphate + H(+) = UMP + CO2. It functions in the pathway pyrimidine metabolism; UMP biosynthesis via de novo pathway; UMP from orotate: step 2/2. Catalyzes the decarboxylation of orotidine 5'-monophosphate (OMP) to uridine 5'-monophosphate (UMP). This chain is Orotidine 5'-phosphate decarboxylase, found in Escherichia coli (strain K12 / MC4100 / BW2952).